Consider the following 130-residue polypeptide: DNA-directed RNA polymerase subunit omega (130 aa).

The disordered stretch occupies residues 109–130; the sequence is EEELLKGLEGLAPPEEQPEEDE.

It belongs to the RNA polymerase subunit omega family. As to quaternary structure, the RNAP catalytic core consists of 2 alpha, 1 beta, 1 beta' and 1 omega subunit. When a sigma factor is associated with the core the holoenzyme is formed, which can initiate transcription.

The catalysed reaction is RNA(n) + a ribonucleoside 5'-triphosphate = RNA(n+1) + diphosphate. In terms of biological role, promotes RNA polymerase assembly. Latches the N- and C-terminal regions of the beta' subunit thereby facilitating its interaction with the beta and alpha subunits. In Rhodopseudomonas palustris (strain BisB5), this protein is DNA-directed RNA polymerase subunit omega.